Reading from the N-terminus, the 347-residue chain is GTPase Obg (347 aa).

The 159-residue stretch at 1–159 (MHFIDQAEIE…VRLRLELKLI (159 aa)) folds into the Obg domain. The OBG-type G domain occupies 160-328 (AEVGIVGLPN…LLQRVWQCLG (169 aa)). GTP-binding positions include 166 to 173 (GLPNAGKS), 191 to 195 (FTTLQ), 213 to 216 (DIPG), 280 to 283 (NKID), and 309 to 311 (SAI). Ser-173 and Thr-193 together coordinate Mg(2+).

This sequence belongs to the TRAFAC class OBG-HflX-like GTPase superfamily. OBG GTPase family. Monomer. Mg(2+) serves as cofactor.

Its subcellular location is the cytoplasm. In terms of biological role, an essential GTPase which binds GTP, GDP and possibly (p)ppGpp with moderate affinity, with high nucleotide exchange rates and a fairly low GTP hydrolysis rate. Plays a role in control of the cell cycle, stress response, ribosome biogenesis and in those bacteria that undergo differentiation, in morphogenesis control. This is GTPase Obg from Synechococcus sp. (strain JA-2-3B'a(2-13)) (Cyanobacteria bacterium Yellowstone B-Prime).